The following is a 509-amino-acid chain: Heat shock 70 kDa protein 14-A (509 aa).

The protein belongs to the heat shock protein 70 family. As to quaternary structure, component of ribosome-associated complex (RAC).

Its subcellular location is the cytoplasm. It localises to the cytosol. Functionally, component of the ribosome-associated complex (RAC), a complex involved in folding or maintaining nascent polypeptides in a folding-competent state. This chain is Heat shock 70 kDa protein 14-A (hspa14-a), found in Xenopus laevis (African clawed frog).